The sequence spans 433 residues: uncharacterized protein (433 aa).

The 118-residue stretch at 61 to 178 (RFNHSLGVYE…QIDADRMDYL (118 aa)) folds into the HD domain.

This is an uncharacterized protein from Bacillus subtilis (strain 168).